A 569-amino-acid polypeptide reads, in one-letter code: Amyloid-beta A4 precursor protein-binding family A member 3 (569 aa).

Met1 bears the N-acetylmethionine mark. 2 disordered regions span residues 1–53 (MEFL…MELD) and 124–168 (AQSV…SSPE). The segment covering 19-32 (EEPKGPEVPSEDHP) has biased composition (basic and acidic residues). The segment covering 132 to 141 (AQAAPRLLQP) has biased composition (low complexity). A phosphoserine mark is found at Ser166 and Ser367. Residues 212-376 (DGVLFGAKYL…SASASHPHNG (165 aa)) enclose the PID domain. PDZ domains are found at residues 389–475 (EVCI…IIHC) and 480–554 (TAVI…TMPA).

As to quaternary structure, binds to the cytoplasmic domain of amyloid protein (APP). Interacts with HIF1AN (via N-terminus). Interacts with NECAB3; seems to mediate the interaction between NECAB3 and HIF1AN. Ubiquitous.

It is found in the cytoplasm. The protein resides in the perinuclear region. Functionally, may modulate processing of the amyloid-beta precursor protein (APP) and hence formation of APP-beta. May enhance the activity of HIF1A in macrophages by inhibiting the activity of HIF1AN. This is Amyloid-beta A4 precursor protein-binding family A member 3 (Apba3) from Rattus norvegicus (Rat).